A 386-amino-acid polypeptide reads, in one-letter code: L-lactate dehydrogenase (386 aa).

Residues 1 to 380 (MIISAASDYR…SGDALSRVTR (380 aa)) enclose the FMN hydroxy acid dehydrogenase domain. Tyr24 is a substrate binding site. 2 residues coordinate FMN: Ser106 and Gln127. Position 129 (Tyr129) interacts with substrate. Thr155 contacts FMN. Arg164 is a binding site for substrate. FMN is bound at residue Lys251. His275 acts as the Proton acceptor in catalysis. Arg278 is a binding site for substrate. 306–330 (DSGIRSGLDVVRMLALGADAVLLGR) contributes to the FMN binding site.

This sequence belongs to the FMN-dependent alpha-hydroxy acid dehydrogenase family. FMN is required as a cofactor.

It is found in the cell inner membrane. The catalysed reaction is (S)-lactate + A = pyruvate + AH2. Functionally, catalyzes the conversion of L-lactate to pyruvate. Is coupled to the respiratory chain. The protein is L-lactate dehydrogenase of Xanthomonas campestris pv. campestris (strain B100).